Consider the following 404-residue polypeptide: RNA exonuclease 3 (404 aa).

One can recognise an Exonuclease domain in the interval 243-389; it reads VLSLDCEMAF…QDAIATMDVV (147 aa).

This sequence belongs to the REXO1/REXO3 family.

Its subcellular location is the cytoplasm. It localises to the nucleus. In terms of biological role, 3' to 5' exoribonuclease required for proper 3' end maturation of MRP RNA and of the U5L snRNA. This is RNA exonuclease 3 (REX3) from Saccharomyces cerevisiae (strain ATCC 204508 / S288c) (Baker's yeast).